The sequence spans 338 residues: Ketol-acid reductoisomerase (NADP(+)) (338 aa).

The region spanning 1–181 (MKVFYDKDCD…GGGRTGIIET (181 aa)) is the KARI N-terminal Rossmann domain. Residues 24–27 (YGSQ), R47, S50, T52, and 82–85 (DEFQ) each bind NADP(+). H107 is a catalytic residue. Residue G133 coordinates NADP(+). A KARI C-terminal knotted domain is found at 182–327 (TFKDETETDL…EQLRSMMPWI (146 aa)). Mg(2+) is bound by residues D190, E194, E226, and E230. Residue S251 participates in substrate binding.

Belongs to the ketol-acid reductoisomerase family. Mg(2+) is required as a cofactor.

The catalysed reaction is (2R)-2,3-dihydroxy-3-methylbutanoate + NADP(+) = (2S)-2-acetolactate + NADPH + H(+). It carries out the reaction (2R,3R)-2,3-dihydroxy-3-methylpentanoate + NADP(+) = (S)-2-ethyl-2-hydroxy-3-oxobutanoate + NADPH + H(+). It participates in amino-acid biosynthesis; L-isoleucine biosynthesis; L-isoleucine from 2-oxobutanoate: step 2/4. The protein operates within amino-acid biosynthesis; L-valine biosynthesis; L-valine from pyruvate: step 2/4. Involved in the biosynthesis of branched-chain amino acids (BCAA). Catalyzes an alkyl-migration followed by a ketol-acid reduction of (S)-2-acetolactate (S2AL) to yield (R)-2,3-dihydroxy-isovalerate. In the isomerase reaction, S2AL is rearranged via a Mg-dependent methyl migration to produce 3-hydroxy-3-methyl-2-ketobutyrate (HMKB). In the reductase reaction, this 2-ketoacid undergoes a metal-dependent reduction by NADPH to yield (R)-2,3-dihydroxy-isovalerate. The polypeptide is Ketol-acid reductoisomerase (NADP(+)) (Pseudomonas fluorescens (strain ATCC BAA-477 / NRRL B-23932 / Pf-5)).